The sequence spans 150 residues: Phosphoribosyl-AMP cyclohydrolase (150 aa).

Asp92 lines the Mg(2+) pocket. Cys93 lines the Zn(2+) pocket. Residues Asp94 and Asp96 each coordinate Mg(2+). Residues Cys111 and Cys118 each coordinate Zn(2+).

Belongs to the PRA-CH family. As to quaternary structure, homodimer. Requires Mg(2+) as cofactor. It depends on Zn(2+) as a cofactor.

It localises to the cytoplasm. The catalysed reaction is 1-(5-phospho-beta-D-ribosyl)-5'-AMP + H2O = 1-(5-phospho-beta-D-ribosyl)-5-[(5-phospho-beta-D-ribosylamino)methylideneamino]imidazole-4-carboxamide. The protein operates within amino-acid biosynthesis; L-histidine biosynthesis; L-histidine from 5-phospho-alpha-D-ribose 1-diphosphate: step 3/9. Its function is as follows. Catalyzes the hydrolysis of the adenine ring of phosphoribosyl-AMP. This Agrobacterium fabrum (strain C58 / ATCC 33970) (Agrobacterium tumefaciens (strain C58)) protein is Phosphoribosyl-AMP cyclohydrolase.